A 678-amino-acid chain; its full sequence is DNA ligase (678 aa).

NAD(+) is bound by residues 47-51, 96-97, and Glu-122; these read DSDYD and SL. Lys-124 acts as the N6-AMP-lysine intermediate in catalysis. NAD(+) contacts are provided by Arg-145, Glu-182, Lys-300, and Lys-324. The Zn(2+) site is built by Cys-418, Cys-421, Cys-436, and Cys-442. The 77-residue stretch at 602-678 folds into the BRCT domain; it reads AYNESFTGKT…ILEDNLKDLL (77 aa).

This sequence belongs to the NAD-dependent DNA ligase family. LigA subfamily. It depends on Mg(2+) as a cofactor. Requires Mn(2+) as cofactor.

The enzyme catalyses NAD(+) + (deoxyribonucleotide)n-3'-hydroxyl + 5'-phospho-(deoxyribonucleotide)m = (deoxyribonucleotide)n+m + AMP + beta-nicotinamide D-nucleotide.. Its function is as follows. DNA ligase that catalyzes the formation of phosphodiester linkages between 5'-phosphoryl and 3'-hydroxyl groups in double-stranded DNA using NAD as a coenzyme and as the energy source for the reaction. It is essential for DNA replication and repair of damaged DNA. The protein is DNA ligase of Francisella tularensis subsp. holarctica (strain OSU18).